The following is a 130-amino-acid chain: Large ribosomal subunit protein bL17 (130 aa).

It belongs to the bacterial ribosomal protein bL17 family. In terms of assembly, part of the 50S ribosomal subunit. Contacts protein L32.

The sequence is that of Large ribosomal subunit protein bL17 from Paraburkholderia xenovorans (strain LB400).